Consider the following 135-residue polypeptide: MIVRTLEEIEDTDADIKTENWRSKRIVLAREKVGFSVHETTLYAGTVNDFWYANHIEAVFVFEGEGEITDKATGETHQLKPGSLYLLNNHDKHQVRPKTDMRTVCVFNPPVTGREVHDENGVYPVIVEDEEEAAS.

The protein belongs to the ectoine synthase family.

It catalyses the reaction (2S)-4-acetamido-2-aminobutanoate = L-ectoine + H2O. Its pathway is amine and polyamine biosynthesis; ectoine biosynthesis; L-ectoine from L-aspartate 4-semialdehyde: step 3/3. Catalyzes the circularization of gamma-N-acetyl-alpha,gamma-diaminobutyric acid (ADABA) to ectoine (1,4,5,6-tetrahydro-2-methyl-4-pyrimidine carboxylic acid), which is an excellent osmoprotectant. The polypeptide is L-ectoine synthase (Saccharopolyspora erythraea (strain ATCC 11635 / DSM 40517 / JCM 4748 / NBRC 13426 / NCIMB 8594 / NRRL 2338)).